The primary structure comprises 613 residues: 8-methylmenaquinol:fumarate reductase flavoprotein subunit (613 aa).

Residues 1–33 (MSEQFTRREFLQSACITMGALAVSTSGVDRAFA) constitute a signal peptide (tat-type signal). FAD is bound by residues 53-58 (GSGAAG), 78-93 (SKVM…AEGG), and D255. Positions 276 and 288 each coordinate substrate. Residue R319 is the Proton acceptor of the active site. Residue H387 participates in substrate binding. Residue E413 coordinates FAD. R424 lines the substrate pocket. Residue 429–430 (SL) coordinates FAD.

Belongs to the FAD-dependent oxidoreductase 2 family. FRD/SDH subfamily. In terms of assembly, the MFR complex is composed of three subunits: a flavoprotein (SdhA), an iron-sulfur protein (SdhB), and one hydrophobic anchor protein (SdhE). The cofactor is FAD. Post-translationally, predicted to be exported by the Tat system. The position of the signal peptide cleavage has not been experimentally proven.

It is found in the periplasm. Its subcellular location is the cell membrane. The catalysed reaction is 8-methylmenaquinone-6 + succinate = 8-methylmenaquinol-6 + fumarate. Its function is as follows. Flavoprotein subunit of 8-methylmenaquinol:fumarate reductase (MFR), that catalyzes the reduction of fumarate using 8-methylmenaquinol-6 as electron donor. The complex shows no succinate oxidation activity. Is involved in anaerobic metabolism. SdhA contains the dicarboxylate reduction site. The polypeptide is 8-methylmenaquinol:fumarate reductase flavoprotein subunit (Wolinella succinogenes (strain ATCC 29543 / DSM 1740 / CCUG 13145 / JCM 31913 / LMG 7466 / NCTC 11488 / FDC 602W) (Vibrio succinogenes)).